A 1176-amino-acid polypeptide reads, in one-letter code: 3-hydroxy-3-methylglutaryl-coenzyme A reductase (1176 aa).

Topologically, residues 1 to 34 (MSLPNHSGSSAFKSFSYIVGTGIKRAAKLSTRNP) are cytoplasmic. Residues 35–55 (IEMIVVVLILSSFSYFYLFNL) form a helical membrane-spanning segment. Over 56-299 (ARTSDIFSGT…VKELIDLADN (244 aa)) the chain is Lumenal. Residues Asn-224 and Asn-238 are each glycosylated (N-linked (GlcNAc...) asparagine). Residues 300–320 (IDIIVILVGYIMMIATFISLY) form a helical membrane-spanning segment. The region spanning 301–465 (DIIVILVGYI…FTWYTAVLAL (165 aa)) is the SSD domain. The Cytoplasmic segment spans residues 321–330 (VNMRAMGSRY). Residues 331-351 (TLATAVVFNGFFSFMLALLTV) traverse the membrane as a helical segment. Residues 352-355 (RALG) are Lumenal-facing. The chain crosses the membrane as a helical span at residues 356–376 (VDVYPVVLAEAIPFLAVTIGF). Residues 377 to 422 (ERPFKLTKRVFQFSKETPLTKQEIRTTIMRAVDTVALPIARDCFME) lie on the Cytoplasmic side of the membrane. The helical transmembrane segment at 423 to 443 (IIVLVLGAKSGISGLEEFCLL) threads the bilayer. Residue Ser-444 is a topological domain, lumenal. Residues 445-465 (AILLAYDFIIMFTWYTAVLAL) form a helical membrane-spanning segment. Residues 466–524 (KLELLRIREINGISADDIKKGTKKSTGYIRRTVIKAFSDDHAAGANTANQKADGPIIGR) are Cytoplasmic-facing. The chain crosses the membrane as a helical span at residues 525 to 545 (VKLLMIVGFVVMHIFKFCSAF). At 546–622 (QSVGPQVNIT…DTYAVYIQHP (77 aa)) the chain is on the lumenal side. Asn-553 and Asn-596 each carry an N-linked (GlcNAc...) asparagine glycan. Residues 623 to 643 (VISKWLTIALFVSLFLNTYLF) traverse the membrane as a helical segment. Over 644–1176 (NVAKQPKQIV…GTEPGTCIKS (533 aa)) the chain is Cytoplasmic. The segment at 699-724 (PNHKRSHNHHHSHSHSHNHHSNHHQS) is disordered. Basic residues predominate over residues 700–721 (NHKRSHNHHHSHSHSHNHHSNH). Glu-841 functions as the Charge relay system in the catalytic mechanism. 847 to 853 (STARGCK) contacts CoA. Residues 907-909 (SRF) and 934-942 (DAMGMNMIS) each bind NADP(+). Lys-972 (charge relay system) is an active-site residue. 1001–1003 (VLK) contributes to the CoA binding site. Asp-1048 (charge relay system) is an active-site residue. CoA is bound at residue 1145 to 1146 (AH). The Proton donor role is filled by His-1146. Position 1150–1151 (1150–1151 (NR)) interacts with NADP(+). The disordered stretch occupies residues 1153–1176 (TQAPTITSGPAPSTGTEPGTCIKS).

This sequence belongs to the HMG-CoA reductase family.

It localises to the endoplasmic reticulum membrane. It catalyses the reaction (R)-mevalonate + 2 NADP(+) + CoA = (3S)-3-hydroxy-3-methylglutaryl-CoA + 2 NADPH + 2 H(+). Its pathway is metabolic intermediate biosynthesis; (R)-mevalonate biosynthesis; (R)-mevalonate from acetyl-CoA: step 3/3. Its function is as follows. HMG-CoA reductase; part of the first module of ergosterol biosynthesis pathway that includes the early steps of the pathway, conserved across all eukaryotes, and which results in the formation of mevalonate from acetyl-coenzyme A (acetyl-CoA). In this module, the cytosolic acetyl-CoA acetyltransferase catalyzes the formation of acetoacetyl-CoA. The hydroxymethylglutaryl-CoA synthase then condenses acetyl-CoA with acetoacetyl-CoA to form HMG-CoA. The rate-limiting step of the early module is the reduction to mevalonate by the 3-hydroxy-3-methylglutaryl-coenzyme A (HMG-CoA) reductase hmgA. This Phycomyces blakesleeanus (strain ATCC 8743b / DSM 1359 / FGSC 10004 / NBRC 33097 / NRRL 1555) protein is 3-hydroxy-3-methylglutaryl-coenzyme A reductase.